The sequence spans 236 residues: Small ribosomal subunit protein uS3 (236 aa).

One can recognise a KH type-2 domain in the interval 39 to 107 (IRSYVMEELK…ETSLNIVEIR (69 aa)). Positions 214 to 236 (ASEHRATRNDNSSSSLNRRRESV) are disordered.

Belongs to the universal ribosomal protein uS3 family. As to quaternary structure, part of the 30S ribosomal subunit. Forms a tight complex with proteins S10 and S14.

Its function is as follows. Binds the lower part of the 30S subunit head. Binds mRNA in the 70S ribosome, positioning it for translation. This is Small ribosomal subunit protein uS3 from Bartonella bacilliformis (strain ATCC 35685 / KC583 / Herrer 020/F12,63).